A 398-amino-acid polypeptide reads, in one-letter code: MNIHEYQAKRLLHEYGAPIANGVAVYSIEQAEKWAKKLPGPLYVVKSQIHAGGRGKGQFKELGPDAKGGVRLAQSVEEVVANVQEMLGKTLVTKQTGPEGKQVNRLYIEDGADIERELYLSLLVDRSVGRIAFVVSTEGGMDIETVAEETPEKIFTLPIDVTEGVTSADCARLCDALELHDSAREDGEKLFPILYKAFCEKDMSLLEINPLIVMKDGHLRVLDAKVSFDNNALFRHPDILELRDLSEEDPKEIEASKHDLAYVALEGTIGCMVNGAGLAMATMDIIKLYGAEPANFLDVGGGASKEKVTAAFKIITADPNVKGILVNIFGGIMRCDVIAEGVVAAVREVGLKVPLVVRLEGTNVEQGKAIINDSGLNVIPADDLDDAAQKIVAAVKGA.

Residues lysine 9–glutamate 254 enclose the ATP-grasp domain. ATP-binding positions include lysine 46, glycine 53–glycine 55, glutamate 109, alanine 112, and glutamate 117. Asparagine 209 and aspartate 223 together coordinate Mg(2+). Residues asparagine 274 and glycine 331–methionine 333 each bind substrate.

It belongs to the succinate/malate CoA ligase beta subunit family. As to quaternary structure, heterotetramer of two alpha and two beta subunits. Mg(2+) serves as cofactor.

It carries out the reaction succinate + ATP + CoA = succinyl-CoA + ADP + phosphate. The enzyme catalyses GTP + succinate + CoA = succinyl-CoA + GDP + phosphate. It functions in the pathway carbohydrate metabolism; tricarboxylic acid cycle; succinate from succinyl-CoA (ligase route): step 1/1. Succinyl-CoA synthetase functions in the citric acid cycle (TCA), coupling the hydrolysis of succinyl-CoA to the synthesis of either ATP or GTP and thus represents the only step of substrate-level phosphorylation in the TCA. The beta subunit provides nucleotide specificity of the enzyme and binds the substrate succinate, while the binding sites for coenzyme A and phosphate are found in the alpha subunit. The protein is Succinate--CoA ligase [ADP-forming] subunit beta of Bartonella tribocorum (strain CIP 105476 / IBS 506).